Here is a 94-residue protein sequence, read N- to C-terminus: Integration host factor subunit beta (94 aa).

The protein belongs to the bacterial histone-like protein family. As to quaternary structure, heterodimer of an alpha and a beta chain.

This protein is one of the two subunits of integration host factor, a specific DNA-binding protein that functions in genetic recombination as well as in transcriptional and translational control. The polypeptide is Integration host factor subunit beta (Azoarcus sp. (strain BH72)).